Here is a 120-residue protein sequence, read N- to C-terminus: Large ribosomal subunit protein uL22 (120 aa).

This sequence belongs to the universal ribosomal protein uL22 family. Part of the 50S ribosomal subunit.

Functionally, this protein binds specifically to 23S rRNA; its binding is stimulated by other ribosomal proteins, e.g. L4, L17, and L20. It is important during the early stages of 50S assembly. It makes multiple contacts with different domains of the 23S rRNA in the assembled 50S subunit and ribosome. Its function is as follows. The globular domain of the protein is located near the polypeptide exit tunnel on the outside of the subunit, while an extended beta-hairpin is found that lines the wall of the exit tunnel in the center of the 70S ribosome. In Borreliella afzelii (strain PKo) (Borrelia afzelii), this protein is Large ribosomal subunit protein uL22.